The following is a 358-amino-acid chain: Mannonate dehydratase (358 aa).

This sequence belongs to the mannonate dehydratase family. It depends on Fe(2+) as a cofactor. Mn(2+) serves as cofactor.

It carries out the reaction D-mannonate = 2-dehydro-3-deoxy-D-gluconate + H2O. The protein operates within carbohydrate metabolism; pentose and glucuronate interconversion. Catalyzes the dehydration of D-mannonate. This is Mannonate dehydratase from Lactococcus lactis subsp. cremoris (strain MG1363).